We begin with the raw amino-acid sequence, 406 residues long: telomere-associated protein 1 (406 aa).

Residues 20-40 (EHHNGSHDNDDKDKEDKEKQN) show a composition bias toward basic and acidic residues. The disordered stretch occupies residues 20 to 46 (EHHNGSHDNDDKDKEDKEKQNTEAVAA). One can recognise an HTH myb-type domain in the interval 147-206 (TTRRVRLRWTQEETADLMEGCKVHGVGNWKKILTDPRFRFNNRTAVDLKDRFRTCFPEDY). The segment at residues 175 to 202 (WKKILTDPRFRFNNRTAVDLKDRFRTCF) is a DNA-binding region (H-T-H motif). The region spanning 234–288 (VNRKERRVFTPEEDERLLNGFMKHGPSWSNIQRDNELGLFERRSTDLRDRFRNAF) is the Myb-like domain. The tract at residues 368-389 (TQELQPQAHSRKQQGGDGLKEE) is disordered.

The protein resides in the nucleus. It is found in the chromosome. Its subcellular location is the telomere. Telomere-binding protein that mediates telomere clustering by promoting formation of head-to-head dimers of DNA molecules through the telomeric tracts. Binds specifically 5'-TTAGTCAGGG-3' repeats in subtelomeric regions. The chain is telomere-associated protein 1 from Yarrowia lipolytica (strain CLIB 122 / E 150) (Yeast).